We begin with the raw amino-acid sequence, 467 residues long: NADH-quinone oxidoreductase subunit H (467 aa).

The next 9 membrane-spanning stretches (helical) occupy residues 18–38 (WWLV…TVLF), 88–108 (AVYV…IAVI), 131–151 (LPIA…GIVL), 172–192 (MISY…YSGS), 206–226 (WYIV…VGET), 256–276 (FMLA…TLFL), 296–316 (WWPL…FIWL), 328–348 (LMKL…MLVA), and 363–383 (IALY…LVDM). Residues 389-467 (GKAADQPAET…PTDGKEASDG (79 aa)) are disordered. Residues 418-430 (PVPPMPGQQVPPV) are compositionally biased toward pro residues.

This sequence belongs to the complex I subunit 1 family. As to quaternary structure, NDH-1 is composed of 14 different subunits. Subunits NuoA, H, J, K, L, M, N constitute the membrane sector of the complex.

The protein localises to the cell membrane. It catalyses the reaction a quinone + NADH + 5 H(+)(in) = a quinol + NAD(+) + 4 H(+)(out). NDH-1 shuttles electrons from NADH, via FMN and iron-sulfur (Fe-S) centers, to quinones in the respiratory chain. The immediate electron acceptor for the enzyme in this species is believed to be ubiquinone. Couples the redox reaction to proton translocation (for every two electrons transferred, four hydrogen ions are translocated across the cytoplasmic membrane), and thus conserves the redox energy in a proton gradient. This subunit may bind ubiquinone. The sequence is that of NADH-quinone oxidoreductase subunit H from Streptomyces coelicolor (strain ATCC BAA-471 / A3(2) / M145).